The primary structure comprises 858 residues: Potassium channel KOR1 (858 aa).

The segment at 1–41 (MGRGIGSKRRVEDDDGENMPGRKKKEEEEEEEDDDGEEEYE) is disordered. Residues 1–102 (MGRGIGSKRR…PDNKWYRLWT (102 aa)) are Cytoplasmic-facing. Acidic residues predominate over residues 27 to 41 (EEEEEEDDDGEEEYE). The helical transmembrane segment at 103–123 (RFILVWAVYSSFFTPLEFGFF) threads the bilayer. The Extracellular segment spans residues 124 to 130 (RGLPRNL). The helical transmembrane segment at 131-151 (FFLDIAGQIAFLIDIVLRFFV) threads the bilayer. Residues 152–174 (AYRDPDTYRMVHNPTSIALRYCK) are Cytoplasmic-facing. A helical membrane pass occupies residues 175–195 (SSFIFDLLGCFPWDAIYKACG). The Extracellular segment spans residues 196-201 (SKEEVR). Residues 202 to 222 (YLLWIRLTRAMKVTEFFRSME) traverse the membrane as a helical; Voltage-sensor segment. The Cytoplasmic segment spans residues 223-236 (KDIRINYLFTRIVK). A helical membrane pass occupies residues 237–257 (LIVVELYCTHTAACIFYYLAT). Residues 258–292 (TLPESMEGYTWIGSLQLGDYSYSHFREIDLTKRYM) are Extracellular-facing. The pore-forming intramembrane region spans 293-312 (TSLYFAIVTMATVGYGDIHA). Residues 313–316 (VNVR) lie on the Extracellular side of the membrane. The helical transmembrane segment at 317-337 (EMIFIMIYVSFDMILGAYLIG) threads the bilayer. Over 338-858 (NMTALIVKGS…GDDGGTEARQ (521 aa)) the chain is Cytoplasmic. A nucleoside 3',5'-cyclic phosphate is bound at residue 419–539 (LFKGCSAEFI…RRILSNLSES (121 aa)). ANK repeat units follow at residues 559–592 (KQEA…DPKN), 596–625 (DGRS…DIDL), 629–658 (FGNT…KLSL), 660–689 (NAGS…DPNA), 693–722 (DHRA…SVFA), and 726–756 (WGTT…ELSR). The 87-residue stretch at 772 to 858 (RCSVFPHHPW…GDDGGTEARQ (87 aa)) folds into the KHA domain.

It belongs to the potassium channel family. Plant (TC 1.A.1.4) subfamily.

The protein localises to the membrane. Its function is as follows. Probable outward-rectifying potassium channel. This is Potassium channel KOR1 from Oryza sativa subsp. japonica (Rice).